The chain runs to 378 residues: Putative monoglyceride lipase (378 aa).

A GXSXG motif is present at residues 97 to 101; the sequence is GHSMG. S99 serves as the catalytic Nucleophile. Residues D219 and H249 each act as charge relay system in the active site. Basic and acidic residues predominate over residues 276–292; sequence PSETVKSEQETAVEHPK. The interval 276 to 350 is disordered; sequence PSETVKSEQE…TSESTTVPET (75 aa). Residues 293 to 305 show a composition bias toward low complexity; it reads PTATTSAPSASPT. S301 carries the post-translational modification Phosphoserine. Residues 341–350 are compositionally biased toward polar residues; it reads TSESTTVPET.

The protein belongs to the AB hydrolase superfamily. Monoacylglycerol lipase family.

It is found in the lipid droplet. It localises to the cytoplasm. The protein localises to the endoplasmic reticulum. Its subcellular location is the mitochondrion outer membrane. It carries out the reaction Hydrolyzes glycerol monoesters of long-chain fatty acids.. Its pathway is glycerolipid metabolism; triacylglycerol degradation. Converts monoacylglycerides (MAG) to free fatty acids and glycerol. Has a strong preference for monounsaturated monoglycerides. Required for efficient degradation of MAG, short-lived intermediates of glycerolipid metabolism which may also function as lipid signaling molecules. Controls inactivation of the signaling lipid N-palmitoylethanolamine (PEA). Involved in fatty acid ethyl ester (FAEE) catabolism. FAEEs are non-oxidative metabolites of ethanol that are transiently incorporated into lipid droplets (LDs). Their mobilization by LD-resident FAEE hydrolases facilitates a controlled metabolism of these potentially toxic lipid metabolites. The chain is Putative monoglyceride lipase (mgl1) from Schizosaccharomyces pombe (strain 972 / ATCC 24843) (Fission yeast).